The following is a 206-amino-acid chain: uncharacterized protein (206 aa).

The 170-residue stretch at 32 to 201 folds into the MurNAc-LAA domain; the sequence is VYIDAGHGGE…AADAIVNGID (170 aa).

This sequence belongs to the N-acetylmuramoyl-L-alanine amidase 3 family.

This is an uncharacterized protein from Bacillus subtilis (strain 168).